Reading from the N-terminus, the 517-residue chain is Cytochrome P450 11B, mitochondrial (517 aa).

The N-terminal 45 residues, methionine 1 to aspartate 45, are a transit peptide targeting the mitochondrion. Cysteine 465 contributes to the heme binding site.

This sequence belongs to the cytochrome P450 family. It depends on heme as a cofactor.

It is found in the mitochondrion membrane. The enzyme catalyses a steroid + 2 reduced [adrenodoxin] + O2 + 2 H(+) = an 11beta-hydroxysteroid + 2 oxidized [adrenodoxin] + H2O. Functionally, has 11 beta-hydroxylation, 18-hydroxylation activities and aldosterone synthetic activity. Catalyzes the final steps of glucocorticoid and mineralocorticoid biosynthesis. In Aquarana catesbeiana (American bullfrog), this protein is Cytochrome P450 11B, mitochondrial (CYP11B).